Here is a 295-residue protein sequence, read N- to C-terminus: Ubiquinol-cytochrome c reductase complex assembly factor 1 (295 aa).

It belongs to the CBP3 family. As to quaternary structure, interacts with UQCC2. Interacts with UQCC3. Forms a complex, named COMB/coordinator of mitochondrial CYTB biogenesis, composed of UQCC1, UQCC2, UQCC4, UQCC5 and UQCC6; stabilizes nascent cytochrome b/MT-CYB and promotes its membrane insertion. Forms a complex, named COMA, composed of UQCC1, UQCC2 and UQCC4; activates MT-CYB translation. Forms a complex, named COMC, composed of UQCC1, UQCC2; UQCC3 and UQCC4; mediates MT-CYB hemylation and association with the first nuclear-encoded CIII subunit UQCRQ. In terms of tissue distribution, in the brain it is restricted to the olfactory bulb, the hippocampus, the piriform cortex and the Purkinje cells.

Its subcellular location is the mitochondrion inner membrane. The protein localises to the cytoplasmic vesicle. Required for the assembly of the ubiquinol-cytochrome c reductase complex (mitochondrial respiratory chain complex III or cytochrome b-c1 complex). Involved in cytochrome b translation and/or stability. This Mus musculus (Mouse) protein is Ubiquinol-cytochrome c reductase complex assembly factor 1 (Uqcc1).